Here is a 160-residue protein sequence, read N- to C-terminus: MTPDDIAALPYRKCVGVVLWDGAGRVFTGQRYDSELPAWQMPQGGIEDGEDARTAALRELVEETGVAVEKVEVLAETPDWIKYDLPPEIVPRIWKGRYKGQAQRWVLMKFLGSDADINIETKHPEFSEWRWLEPASVLDSIVPFKRDVYEQVFDAFSDWL.

The Nudix hydrolase domain occupies 10–154 (PYRKCVGVVL…KRDVYEQVFD (145 aa)). The Nudix box signature appears at 44–65 (GGIEDGEDARTAALRELVEETG).

This sequence belongs to the Nudix hydrolase family. RppH subfamily. A divalent metal cation serves as cofactor.

In terms of biological role, accelerates the degradation of transcripts by removing pyrophosphate from the 5'-end of triphosphorylated RNA, leading to a more labile monophosphorylated state that can stimulate subsequent ribonuclease cleavage. The polypeptide is RNA pyrophosphohydrolase (Dinoroseobacter shibae (strain DSM 16493 / NCIMB 14021 / DFL 12)).